The sequence spans 84 residues: Toxin Tb1 (84 aa).

The N-terminal stretch at 1-20 is a signal peptide; it reads MKGMILFISCLLLIGIVVEC. The LCN-type CS-alpha/beta domain occupies 21 to 82; that stretch reads KEGYLMDHEG…VWDRATNKCG (62 aa). Disulfide bonds link Cys-31/Cys-81, Cys-35/Cys-57, Cys-43/Cys-62, and Cys-47/Cys-64. Cys-81 carries the post-translational modification Cysteine amide.

The protein belongs to the long (4 C-C) scorpion toxin superfamily. Sodium channel inhibitor family. Beta subfamily. In terms of tissue distribution, expressed by the venom gland.

It localises to the secreted. In terms of biological role, beta toxins bind voltage-independently at site-4 of sodium channels (Nav) and shift the voltage of activation toward more negative potentials thereby affecting sodium channel activation and promoting spontaneous and repetitive firing. Is lethal to mice. This Tityus bahiensis (Brazilian scorpion) protein is Toxin Tb1.